The primary structure comprises 1249 residues: Clustered mitochondria protein homolog (1249 aa).

Positions 1–32 (MAQTNGELEHSKETPEQLTNGNHPEETQEEDN) are disordered. The 245-residue stretch at 318-562 (DITRSQENYL…RVTPLDVMWQ (245 aa)) folds into the Clu domain. The span at 605-628 (KAEADAAKAESSEATESKEQASEE) shows a compositional bias: basic and acidic residues. Disordered stretches follow at residues 605-636 (KAEA…DQER) and 868-903 (KAPA…AAKE). 3 TPR repeats span residues 974–1007 (AKLY…TERT), 1016–1049 (ILSY…WKII), and 1058–1091 (ITTM…CESL). The interval 1174 to 1249 (NMNPRSLGTK…KLRGSKKSSA (76 aa)) is disordered. The span at 1176–1190 (NPRSLGTKIQPQVGQ) shows a compositional bias: polar residues.

The protein belongs to the CLU family. May associate with the eukaryotic translation initiation factor 3 (eIF-3) complex.

The protein resides in the cytoplasm. MRNA-binding protein involved in proper cytoplasmic distribution of mitochondria. This chain is Clustered mitochondria protein homolog, found in Aspergillus niger (strain ATCC MYA-4892 / CBS 513.88 / FGSC A1513).